Reading from the N-terminus, the 1874-residue chain is Protein TIC 214 (1874 aa).

Transmembrane regions (helical) follow at residues 18–38, 64–84, 87–107, 124–144, 172–192, and 221–241; these read IINSVVVVGLYYGFLTTFSIG, FITGQLMMFISIYYAPLHLAL, PHTITVLALPYLLFHFFWNNH, LSIQCVFLNNLIFQLFNYFIL, VGWLIGHILFMKWLGLVLVWI, and IFSILLFITCVYYLGRIPSPI. Disordered regions lie at residues 248-310 and 1567-1624; these read ETSK…EIRV and KTEC…NEED. Residues 255-268 show a composition bias toward acidic residues; sequence GVESEEEGDVEIET. Basic and acidic residues-rich tracts occupy residues 298 to 310 and 1584 to 1601; these read DSNKIDETEEIRV and NQKEKETPADQEDLRSDA.

It belongs to the TIC214 family. As to quaternary structure, part of the Tic complex.

Its subcellular location is the plastid. It localises to the chloroplast inner membrane. Its function is as follows. Involved in protein precursor import into chloroplasts. May be part of an intermediate translocation complex acting as a protein-conducting channel at the inner envelope. This chain is Protein TIC 214, found in Coffea arabica (Arabian coffee).